Reading from the N-terminus, the 324-residue chain is uncharacterized protein (324 aa).

Positions 1-11 (MNTNINVNGSN) are enriched in polar residues. Disordered stretches follow at residues 1–77 (MNTN…YSYS), 132–194 (NNHY…NNNN), and 272–324 (DENI…DNDS). The span at 21 to 64 (NENNNNNNGRNNNTNNNNNGRYNNNNNNNNNNNNNNYNLNMNST) shows a compositional bias: low complexity. Residues 279–324 (SNNNNNNNNNNNNSYNVNICRNNSNFNVNENNGGDNNNDNNNDNDS) are compositionally biased toward low complexity.

This is an uncharacterized protein from Dictyostelium discoideum (Social amoeba).